The following is a 123-amino-acid chain: Small ribosomal subunit protein uS12c (123 aa).

It belongs to the universal ribosomal protein uS12 family. In terms of assembly, part of the 30S ribosomal subunit.

It is found in the plastid. Its subcellular location is the chloroplast. Functionally, with S4 and S5 plays an important role in translational accuracy. Located at the interface of the 30S and 50S subunits. This Chlorokybus atmophyticus (Soil alga) protein is Small ribosomal subunit protein uS12c (rps12).